Consider the following 430-residue polypeptide: Serine carboxypeptidase-like 13 (430 aa).

A signal peptide spans 1-22; sequence MSLTLEFLLLLIVLILSHHAHS. Cystine bridges form between Cys-81–Cys-319, Cys-240–Cys-254, and Cys-278–Cys-285. Asn-102 carries an N-linked (GlcNAc...) asparagine glycan. Ser-177 is a catalytic residue. N-linked (GlcNAc...) asparagine glycans are attached at residues Asn-299 and Asn-323. The active site involves Asp-355. N-linked (GlcNAc...) asparagine glycosylation occurs at Asn-371. His-408 is a catalytic residue.

This sequence belongs to the peptidase S10 family. Expression not detected.

The protein resides in the secreted. It carries out the reaction 2 1-O-(trans-sinapoyl)-beta-D-glucose = 1,2-di-O-sinapoyl beta-D-glucose + D-glucose. In terms of biological role, catalyzes the formation of 1,2-bis-O-sinapoyl beta-D-glucoside. The protein is Serine carboxypeptidase-like 13 (SCPL13) of Arabidopsis thaliana (Mouse-ear cress).